A 622-amino-acid chain; its full sequence is Probable potassium transport system protein Kup (622 aa).

12 consecutive transmembrane segments (helical) span residues 8–28 (LAVL…TSVL), 50–70 (ILSI…VSLV), 101–121 (VLLL…VITP), 137–157 (PTFT…LFAM), 165–185 (IGKF…LLGV), 213–233 (ITFI…ALYA), 247–267 (WFSV…ALLL), 285–305 (ALIP…QALI), 337–357 (IYMP…VVMF), 366–386 (AYGI…FYVI), 393–413 (PLAL…AFFA), and 419–439 (LFAG…LMIT).

This sequence belongs to the HAK/KUP transporter (TC 2.A.72) family.

Its subcellular location is the cell inner membrane. It catalyses the reaction K(+)(in) + H(+)(in) = K(+)(out) + H(+)(out). Functionally, transport of potassium into the cell. Likely operates as a K(+):H(+) symporter. This chain is Probable potassium transport system protein Kup, found in Polaromonas naphthalenivorans (strain CJ2).